A 305-amino-acid chain; its full sequence is MELIFLGTSAGVPTRTRNVTAILLNLQHPTQSGLWLFDCGEGTQHQLLHTAFNPGKLDKIFISHLHGDHLFGLPGLLCSRSMSGIIQPLTIYGPQGIREFVETALRISGSWTDYPLEIVEIGAGEILDDGLRKVTAYPMEHPLECYGYRIEEHDKPGALNAQALKAAGVPPSPLFQELKAGKTIMLEDGRQINGADYLAAPVPGKALAIFGDTGPCDAALDLAKGVDVMVHEATLDITMEAKANSRGHSSTRQAATLAREAGVGKLIITHVSSRYDDKGCQHLLRECRSIFPATELANDFTVFNV.

Positions 64, 66, 68, 69, 141, 212, and 270 each coordinate Zn(2+). Asp68 functions as the Proton acceptor in the catalytic mechanism.

This sequence belongs to the RNase Z family. RNase BN subfamily. Homodimer. Requires Zn(2+) as cofactor.

Zinc phosphodiesterase, which has both exoribonuclease and endoribonuclease activities. The sequence is that of Ribonuclease BN from Escherichia coli O157:H7.